Reading from the N-terminus, the 119-residue chain is Large ribosomal subunit protein bL17 (119 aa).

This sequence belongs to the bacterial ribosomal protein bL17 family. As to quaternary structure, part of the 50S ribosomal subunit. Contacts protein L32.

This is Large ribosomal subunit protein bL17 from Mesoplasma florum (strain ATCC 33453 / NBRC 100688 / NCTC 11704 / L1) (Acholeplasma florum).